The chain runs to 687 residues: Calcium-binding protein SP84 (687 aa).

The signal sequence occupies residues 1–19; that stretch reads MMRAIYLLVVVCWAAAANA. EF-hand domains follow at residues 152–187, 257–292, 406–441, 476–511, and 579–614; these read LESD…HKNK, LTEI…TDDV, KTEA…PHMV, IENA…NNDA, and MTER…VKDL. Residues Asp-592, Asn-594, Asp-596, Glu-598, and Asp-603 each coordinate Ca(2+).

Expressed in salivary glands where expression is strongest in type III cells in the posterior lobe of the principal glands (at protein level). Not expressed in midgut, Malpighian tubules or epidermis.

Its subcellular location is the secreted. Binds calcium. During feeding of the phloem sap, protein is injected into sieve tubes of rice plants. This process may suppress the sieve-element clogging and facilitate continuous ingestion from sieve tubes. The protein is Calcium-binding protein SP84 of Nephotettix cincticeps (Green rice leafhopper).